A 341-amino-acid chain; its full sequence is Antihemorrhagic factor BJ46a (341 aa).

Residues 1-19 (MNSLVALVLLGQIIGSTLS) form the signal peptide. 2 consecutive Cystatin fetuin-A-type domains span residues 22–130 (VRGD…AKCH) and 141–254 (RNCP…SDCV). The Cell attachment site signature appears at 23–25 (RGD). 6 disulfide bridges follow: Cys28/Cys332, Cys85/Cys96, Cys110/Cys129, Cys143/Cys146, Cys205/Cys217, and Cys230/Cys253. A glycan (N-linked (GlcNAc...) asparagine) is linked at Asn95. Residue Asn204 is glycosylated (N-linked (GlcNAc...) asparagine). N-linked (GlcNAc...) asparagine glycans are attached at residues Asn282 and Asn293.

In terms of assembly, homodimer. Expressed by the liver.

The protein resides in the secreted. Its function is as follows. Potent inhibitor of hemorrhagic activity but also proteolytic activities of atrolysin C and jararhagin. Inhibition occurs by formation of a non-covalent complex between BJ46a and the proteinases at their metalloproteinase domains. The polypeptide is Antihemorrhagic factor BJ46a (Bothrops jararaca (Jararaca)).